The chain runs to 541 residues: Probable inorganic phosphate transporter 1-8 (541 aa).

Over 1 to 28 (MARQEQQQHLQVLSALDAAKTQWYHFTA) the chain is Cytoplasmic. The helical transmembrane segment at 29–49 (IVVAGMGFFTDAYDLFCISLV) threads the bilayer. At 50-74 (TKLLGRIYYTDLAKENPGSLPPNVA) the chain is on the extracellular side. Residues 75–95 (AAVNGVAFCGTLAGQLFFGWL) form a helical membrane-spanning segment. The Cytoplasmic segment spans residues 96–102 (GDKLGRK). The helical transmembrane segment at 103–123 (SVYGMTLLMMVICSIASGLSF) threads the bilayer. The Extracellular portion of the chain corresponds to 124-126 (SHT). The helical transmembrane segment at 127–147 (PTSVMATLCFFRFWLGFGIGG) threads the bilayer. Residues 148-168 (DYPLSATIMSEYANKKTRGAF) are Cytoplasmic-facing. The helical transmembrane segment at 169-189 (IAAVFAMQGFGILAGGIVTLI) threads the bilayer. The Extracellular segment spans residues 190–215 (ISSAFRAGFPAPAYQDDRAGSTVRQA). The chain crosses the membrane as a helical span at residues 216-236 (DYVWRIILMLGAMPALLTYYW). Residues 237–297 (RMKMPETARY…GLFSRQFARR (61 aa)) are Cytoplasmic-facing. A helical membrane pass occupies residues 298-318 (HGLHLVGTATTWFLLDIAFYS). Residues 319–353 (QNLFQKDIFTSINWIPKAKTMSALEEVFRIARAQT) are Extracellular-facing. Residues 354–374 (LIALCGTVPGYWFTVFLIDIV) traverse the membrane as a helical segment. The Cytoplasmic segment spans residues 375 to 376 (GR). The helical transmembrane segment at 377–397 (FAIQLLGFFMMTVFMLGLAVP) threads the bilayer. Over 398–404 (YHHWTTK) the chain is Extracellular. A helical transmembrane segment spans residues 405–425 (GNHIGFVVMYAFTFFFANFGP). Over 426–447 (NSTTFIVPAEIFPARLRSTCHG) the chain is Cytoplasmic. A helical membrane pass occupies residues 448–468 (ISAAAGKAGAIIGSFGFLYAA). Over 469-486 (QDPHKPDAGYKPGIGVRN) the chain is Extracellular. The helical transmembrane segment at 487-507 (SLFVLAGCNLLGFICTFLVPE) threads the bilayer. Residues 508-541 (SKGKSLEEMSGEAEDDDDEVAAAGGGAAVRPQTA) are Cytoplasmic-facing. The interval 514–541 (EEMSGEAEDDDDEVAAAGGGAAVRPQTA) is disordered. Residues 516–527 (MSGEAEDDDDEV) show a composition bias toward acidic residues.

Belongs to the major facilitator superfamily. Phosphate:H(+) symporter (TC 2.A.1.9) family.

The protein localises to the membrane. Functionally, high-affinity transporter for external inorganic phosphate. The chain is Probable inorganic phosphate transporter 1-8 (PHT1-8) from Oryza sativa subsp. japonica (Rice).